The sequence spans 602 residues: Bifunctional lycopene cyclase/phytoene synthase (602 aa).

Positions 1–238 are lycopene beta-cyclase; sequence MLTYMEVHLY…LVFASCATDR (238 aa). 7 helical membrane passes run 7-27, 35-55, 69-89, 110-130, 142-162, 173-193, and 211-231; these read VHLY…KPFF, YIFL…YIVY, VIGY…LITV, PVFQ…TIAA, PFYG…LWIG, AVLF…QYAI, and LPSL…VLVF. The segment at 245-602 is phytoene synthase; sequence IYITPMNHNK…RGKSQAFTVI (358 aa).

In the N-terminal section; belongs to the lycopene beta-cyclase family. It in the C-terminal section; belongs to the phytoene/squalene synthase family.

It localises to the membrane. It catalyses the reaction all-trans-lycopene = gamma-carotene. The enzyme catalyses gamma-carotene = all-trans-beta-carotene. It carries out the reaction 2 (2E,6E,10E)-geranylgeranyl diphosphate = 15-cis-phytoene + 2 diphosphate. Its pathway is carotenoid biosynthesis; beta-carotene biosynthesis. It participates in carotenoid biosynthesis; phytoene biosynthesis; all-trans-phytoene from geranylgeranyl diphosphate: step 1/1. In terms of biological role, bifunctional enzyme that catalyzes the reactions from geranylgeranyl diphosphate to phytoene (phytoene synthase) and lycopene to beta-carotene via the intermediate gamma-carotene (lycopene cyclase). The chain is Bifunctional lycopene cyclase/phytoene synthase from Phycomyces blakesleeanus (strain ATCC 8743b / DSM 1359 / FGSC 10004 / NBRC 33097 / NRRL 1555).